Reading from the N-terminus, the 244-residue chain is Probable Ni/Fe-hydrogenase B-type cytochrome subunit (244 aa).

4 helical membrane passes run 39–59 (LWHW…FFIG), 73–93 (FLMG…AIGM), 150–171 (FAMF…FAMY), and 204–221 (LGMW…YAAI).

This sequence belongs to the HupC/HyaC/HydC family.

Its subcellular location is the cell membrane. Its function is as follows. Probable b-type cytochrome. The chain is Probable Ni/Fe-hydrogenase B-type cytochrome subunit (hoxZ) from Cupriavidus necator (strain ATCC 17699 / DSM 428 / KCTC 22496 / NCIMB 10442 / H16 / Stanier 337) (Ralstonia eutropha).